A 276-amino-acid polypeptide reads, in one-letter code: Shikimate dehydrogenase (NADP(+)) (276 aa).

Shikimate-binding positions include 19–21 (SKS) and threonine 66. Lysine 70 serves as the catalytic Proton acceptor. Residue aspartate 82 coordinates NADP(+). Residues asparagine 91 and aspartate 107 each coordinate shikimate. NADP(+) contacts are provided by residues 133–137 (GAGGA), 157–162 (NRTRSR), and leucine 222. Tyrosine 224 provides a ligand contact to shikimate. Glycine 245 lines the NADP(+) pocket.

Belongs to the shikimate dehydrogenase family. Homodimer.

It catalyses the reaction shikimate + NADP(+) = 3-dehydroshikimate + NADPH + H(+). The protein operates within metabolic intermediate biosynthesis; chorismate biosynthesis; chorismate from D-erythrose 4-phosphate and phosphoenolpyruvate: step 4/7. Involved in the biosynthesis of the chorismate, which leads to the biosynthesis of aromatic amino acids. Catalyzes the reversible NADPH linked reduction of 3-dehydroshikimate (DHSA) to yield shikimate (SA). The protein is Shikimate dehydrogenase (NADP(+)) of Ruegeria sp. (strain TM1040) (Silicibacter sp.).